A 164-amino-acid polypeptide reads, in one-letter code: Biotin carboxyl carrier protein of acetyl-CoA carboxylase (164 aa).

The Biotinyl-binding domain occupies 86–162 (GDFIVSPLVG…QFGSKLFRIV (77 aa)). Lys128 carries the N6-biotinyllysine modification.

As to quaternary structure, homodimer.

It functions in the pathway lipid metabolism; fatty acid biosynthesis. In terms of biological role, this protein is a component of the acetyl coenzyme A carboxylase complex; first, biotin carboxylase catalyzes the carboxylation of the carrier protein and then the transcarboxylase transfers the carboxyl group to form malonyl-CoA. The protein is Biotin carboxyl carrier protein of acetyl-CoA carboxylase (accB) of Chlamydia trachomatis serovar D (strain ATCC VR-885 / DSM 19411 / UW-3/Cx).